Reading from the N-terminus, the 443-residue chain is Exodeoxyribonuclease 7 large subunit (443 aa).

Belongs to the XseA family. Heterooligomer composed of large and small subunits.

It localises to the cytoplasm. It catalyses the reaction Exonucleolytic cleavage in either 5'- to 3'- or 3'- to 5'-direction to yield nucleoside 5'-phosphates.. In terms of biological role, bidirectionally degrades single-stranded DNA into large acid-insoluble oligonucleotides, which are then degraded further into small acid-soluble oligonucleotides. This chain is Exodeoxyribonuclease 7 large subunit, found in Legionella pneumophila (strain Paris).